A 135-amino-acid polypeptide reads, in one-letter code: Large ribosomal subunit protein mL41B (135 aa).

The N-terminal 13 residues, 1–13, are a transit peptide targeting the mitochondrion; the sequence is MGLITKIARGLVR.

This sequence belongs to the mitochondrion-specific ribosomal protein mL41 family. In terms of assembly, component of the mitochondrial ribosome large subunit (39S) which comprises a 16S rRNA and about 50 distinct proteins.

The protein resides in the mitochondrion. Component of the mitochondrial ribosome large subunit. Also involved in apoptosis and cell cycle. The sequence is that of Large ribosomal subunit protein mL41B (mrpl41-b) from Xenopus laevis (African clawed frog).